A 449-amino-acid chain; its full sequence is Trigger factor (449 aa).

Positions 169-254 constitute a PPIase FKBP-type domain; sequence GDRITVDFVG…AKQVEAPGEL (86 aa).

It belongs to the FKBP-type PPIase family. Tig subfamily.

Its subcellular location is the cytoplasm. It catalyses the reaction [protein]-peptidylproline (omega=180) = [protein]-peptidylproline (omega=0). In terms of biological role, involved in protein export. Acts as a chaperone by maintaining the newly synthesized protein in an open conformation. Functions as a peptidyl-prolyl cis-trans isomerase. In Azorhizobium caulinodans (strain ATCC 43989 / DSM 5975 / JCM 20966 / LMG 6465 / NBRC 14845 / NCIMB 13405 / ORS 571), this protein is Trigger factor.